The sequence spans 1323 residues: Glutamate receptor ionotropic, NMDA 2D (1323 aa).

The signal sequence occupies residues 1 to 27; the sequence is MRGAGGPRGPRGPAKMLLLLALACASP. Topologically, residues 28-579 are extracellular; the sequence is FPEEVPGPGA…SPSAFLEPYS (552 aa). Residue Asn89 is glycosylated (N-linked (GlcNAc...) asparagine). A disulfide bridge connects residues Cys101 and Cys345. Residues Asn349, Asn363, Asn381, and Asn464 are each glycosylated (N-linked (GlcNAc...) asparagine). 2 disulfide bridges follow: Cys452–Cys480 and Cys459–Cys481. Residues Ser536, Thr538, and Arg543 each coordinate L-glutamate. Asn566 carries an N-linked (GlcNAc...) asparagine glycan. Residues 580–601 form a helical membrane-spanning segment; sequence PAVWVMMFVMCLTVVAVTVFIF. The Cytoplasmic portion of the chain corresponds to 602–626; sequence EYLSPVGYNRSLATGKRPGGSTFTI. The segment at residues 627–638 is an intramembrane region (discontinuously helical); that stretch reads GKSIWLLWALVF. A pore-forming region spans residues 628 to 647; it reads KSIWLLWALVFNNSVPVENP. Over 639-650 the chain is Cytoplasmic; the sequence is NNSVPVENPRGT. The helical transmembrane segment at 651 to 671 threads the bilayer; that stretch reads TSKIMVLVWAFFAVIFLASYT. At 672–840 the chain is on the extracellular side; that stretch reads ANLAAFMIQE…EVMSSKLDID (169 aa). N-linked (GlcNAc...) asparagine glycosylation occurs at Asn712. L-glutamate-binding residues include Ser714, Thr715, and Asp756. A disulfide bridge connects residues Cys770 and Cys825. The chain crosses the membrane as a helical span at residues 841-864; the sequence is NMAGVFYMLLVAMGLSLLVFAWEH. Residues 865–1323 lie on the Cytoplasmic side of the membrane; the sequence is LVYWRLRHCL…AHFSSLESEV (459 aa). Disordered regions lie at residues 897 to 952, 977 to 1112, and 1201 to 1323; these read EAAP…PGGA, AAPR…SLGG, and PWAA…ESEV. Pro residues predominate over residues 899-929; that stretch reads APPPAKPPPPPQPLPSPAYPAARPPPGPAPF. Over residues 931–940 the composition is skewed to basic and acidic residues; the sequence is PRERAAADRW. Low complexity predominate over residues 977–986; sequence AAPRGAAGRP. Over residues 987-1001 the composition is skewed to pro residues; sequence LSPPTTQPPQKPPPS. A compositionally biased stretch (low complexity) spans 1030–1039; that stretch reads AAAAAAVGPP. Positions 1080–1092 are enriched in pro residues; the sequence is TAPPPRRAAPPPC. Basic residues predominate over residues 1208–1228; that stretch reads PRRRARCGCPRPHPHRPRASH. Arg1303 carries the omega-N-methylarginine modification. Residue Ser1313 is modified to Phosphoserine. The PDZ-binding signature appears at 1321–1323; the sequence is SEV.

Belongs to the glutamate-gated ion channel (TC 1.A.10.1) family. NR2D/GRIN2D subfamily. As to quaternary structure, heterotetramer. Forms heterotetrameric channels composed of two GluN1/zeta subunits (GRIN1), and two identical GluN2/epsilon subunits (GRIN2A, GRIN2B, GRIN2C or GRIN2D) or GluN3 subunits (GRIN3A or GRIN3B) (in vitro). In vivo, the subunit composition may depend on the expression levels of the different subunits. Interacts with PDZ domains of PATJ and DLG4. Detected in neonate brain synaptosomes (at protein level).

It localises to the cell membrane. The protein resides in the postsynaptic cell membrane. It carries out the reaction Ca(2+)(in) = Ca(2+)(out). The enzyme catalyses Na(+)(in) = Na(+)(out). It catalyses the reaction K(+)(in) = K(+)(out). In terms of biological role, component of N-methyl-D-aspartate (NMDA) receptors (NMDARs) that function as heterotetrameric, ligand-gated cation channels with high calcium permeability and voltage-dependent block by Mg(2+). Participates in synaptic plasticity for learning and memory formation. Channel activation requires binding of the neurotransmitter L-glutamate to the GluN2 subunit, glycine or D-serine binding to the GluN1 subunit, plus membrane depolarization to eliminate channel inhibition by Mg(2+). NMDARs mediate simultaneously the potasium efflux and the influx of calcium and sodium. Each GluN2 subunit confers differential attributes to channel properties, including activation, deactivation and desensitization kinetics, pH sensitivity, Ca2(+) permeability, and binding to allosteric modulators. This chain is Glutamate receptor ionotropic, NMDA 2D, found in Mus musculus (Mouse).